The following is a 430-amino-acid chain: Palmitoyltransferase ZDHHC11 (430 aa).

At 1-46 (MTNLNCFGRHRRRTAPHNATGSRSELVAPPIHSRINGWSSPLHSFQ) the chain is on the cytoplasmic side. A helical membrane pass occupies residues 47-67 (FIALLIFSFMAIVAFGIYVPL). The Lumenal segment spans residues 68 to 76 (LPAPWSYAA). A helical membrane pass occupies residues 77–97 (YALIGSAFVLHLFSHVTAVTI). Topologically, residues 98 to 176 (DPADVNVRRR…GGRNYWFFFT (79 aa)) are cytoplasmic. The region spanning 129 to 179 (LHCTLCEVDVSPKAKHCSTCNKCIADFDHHCKWLNNCVGGRNYWFFFTAVS) is the DHHC domain. Cys159 functions as the S-palmitoyl cysteine intermediate in the catalytic mechanism. A helical membrane pass occupies residues 177 to 197 (AVSSAVIGVILLIPLVLFVFI). At 198–234 (EHYVNPAVLRTAPQFQTVKGNGTWLVFLPVAPVETSS) the chain is on the lumenal side. Residues 235 to 255 (ISLLVVSFITALLSLAALLLL) form a helical membrane-spanning segment. At 256-430 (CHLLCFHIYL…QYLHFKQKMP (175 aa)) the chain is on the cytoplasmic side.

The protein belongs to the DHHC palmitoyltransferase family.

The protein localises to the endoplasmic reticulum membrane. It catalyses the reaction L-cysteinyl-[protein] + hexadecanoyl-CoA = S-hexadecanoyl-L-cysteinyl-[protein] + CoA. Functionally, endoplasmic reticulum-localized palmitoyltransferase that could catalyze the addition of palmitate onto protein substrates. This Danio rerio (Zebrafish) protein is Palmitoyltransferase ZDHHC11.